Here is a 312-residue protein sequence, read N- to C-terminus: Aquaporin-6 (312 aa).

Topologically, residues 1–50 are cytoplasmic; it reads MDDKFDDDALPNSKTTAKDYEDKLPEYDYTTTFPNTWMRLREPFREYFAE. The chain crosses the membrane as a helical span at residues 51-71; the sequence is FVGVAVLIIFGVGADCQVVLS. Residues 72 to 89 lie on the Extracellular side of the membrane; the sequence is ANTGVASSPKGSYLSLNC. The chain crosses the membrane as a helical span at residues 90–110; it reads GWAIGTAMGVWISGGISGGHI. Positions 111-113 match the NPA 1 motif; it reads NPA. Over 111–128 the chain is Cytoplasmic; that stretch reads NPAVTLAMATWRGFPWWK. The chain crosses the membrane as a helical span at residues 129 to 149; it reads VPGFIFAQLLGGIVGAGLVYV. Residues 150-183 are Extracellular-facing; sequence NYIHAIDIVEGGRHIRTLDTAGLFATYAADYMTN. Residue Asn-183 is glycosylated (N-linked (GlcNAc...) asparagine). A helical transmembrane segment spans residues 184 to 204; the sequence is LSCFFSEFLATAVLIIVIHAM. Residues 205–213 are Cytoplasmic-facing; it reads NDKRNTPPP. The chain crosses the membrane as a helical span at residues 214–234; that stretch reads AGIVPFVLFFLILGIGASLGM. Residues 235–267 lie on the Extracellular side of the membrane; sequence ETGYAINPARDLGPRMLTAMVGYGRQVFAFRNQ. The NPA 2 motif lies at 241 to 243; the sequence is NPA. The chain crosses the membrane as a helical span at residues 268–288; sequence YWIWCPVLAPFLGAQVGTIFY. Residues 289–312 lie on the Cytoplasmic side of the membrane; sequence DLFFYKGQDNVFGRLGSHIHISPA.

Belongs to the MIP/aquaporin (TC 1.A.8) family.

The protein resides in the membrane. It carries out the reaction H2O(in) = H2O(out). In terms of biological role, water channel required to facilitate the transport of water across membranes. Does not mediate the transport carbon dioxide nor nitric oxide across the membrane. Plays a key role in root water transport of mycorrhizal plant such ectomycorrhizal white spruce or trembling aspen via the hydration at the hyphal-root interphase. Contributes in fungal cellular processes during the basidiocarp formation. The protein is Aquaporin-6 of Laccaria bicolor (Bicoloured deceiver).